Here is a 186-residue protein sequence, read N- to C-terminus: Bilin biosynthesis protein CpeZ (186 aa).

Its function is as follows. Involved in the biosynthesis of bilin. In Synechococcus sp. (strain WH8020), this protein is Bilin biosynthesis protein CpeZ (cpeZ).